We begin with the raw amino-acid sequence, 148 residues long: UPF0260 protein PC1_1943 (148 aa).

Belongs to the UPF0260 family.

The sequence is that of UPF0260 protein PC1_1943 from Pectobacterium carotovorum subsp. carotovorum (strain PC1).